The chain runs to 131 residues: Leptin receptor gene-related protein (131 aa).

4 helical membrane-spanning segments follow: residues 7-27 (LVAL…GCAL), 32-52 (VYWP…HFIA), 69-89 (LAYF…VILA), and 100-120 (GLVL…FLVF).

The protein belongs to the OB-RGRP/VPS55 family. Interacts with LEPR. Interacts with RAB13.

The protein localises to the golgi apparatus membrane. Its subcellular location is the endosome membrane. Its function is as follows. Negatively regulates leptin receptor (LEPR) cell surface expression, and thus decreases response to leptin/LEP. Negatively regulates growth hormone (GH) receptor cell surface expression in liver. May play a role in liver resistance to GH during periods of reduced nutrient availability. This chain is Leptin receptor gene-related protein (LEPROT), found in Sus scrofa (Pig).